A 75-amino-acid polypeptide reads, in one-letter code: DNA-directed RNA polymerase subunit omega (75 aa).

Belongs to the RNA polymerase subunit omega family. As to quaternary structure, in cyanobacteria the RNAP catalytic core is composed of 2 alpha, 1 beta, 1 beta', 1 gamma and 1 omega subunit. When a sigma factor is associated with the core the holoenzyme is formed, which can initiate transcription.

The catalysed reaction is RNA(n) + a ribonucleoside 5'-triphosphate = RNA(n+1) + diphosphate. In terms of biological role, promotes RNA polymerase assembly. Latches the N- and C-terminal regions of the beta' subunit thereby facilitating its interaction with the beta and alpha subunits. The chain is DNA-directed RNA polymerase subunit omega from Prochlorococcus marinus (strain MIT 9313).